A 292-amino-acid chain; its full sequence is uncharacterized protein (292 aa).

Active-site charge relay system residues include Thr-43 and Tyr-105. Tyr-131 serves as the catalytic Proton donor. Lys-159 (schiff-base intermediate with substrate) is an active-site residue.

It belongs to the DapA family. In terms of assembly, homotetramer.

Its subcellular location is the cytoplasm. This is an uncharacterized protein from Thermococcus kodakarensis (strain ATCC BAA-918 / JCM 12380 / KOD1) (Pyrococcus kodakaraensis (strain KOD1)).